A 156-amino-acid polypeptide reads, in one-letter code: Acyl carrier protein, mitochondrial (156 aa).

A mitochondrion-targeting transit peptide spans 1–68; the sequence is MASRVLSAYV…GRVTQLCRQY (68 aa). The region spanning 77–152 is the Carrier domain; sequence EGIQDRVLYV…EIVDYIADKK (76 aa). Lysine 88 bears the N6-acetyllysine mark. Serine 112 is subject to O-(pantetheine 4'-phosphoryl)serine.

Belongs to the acyl carrier protein (ACP) family. As to quaternary structure, mammalian complex I is composed of 45 different subunits. Interacts with ETFRF1. Identified in a complex composed of MALSU1, MIEF1 upstream open reading frame protein and NDUFAB1; within the trimeric complex, MIEF1 upstream open reading frame protein functions as a bridging scaffold that interacts with MALSU1 on one side, and with NDUFAB1 on the other side. The complex interacts with the mitochondrial large ribosomal subunit. Interacts with alpha-1-microglobulin chain; this interaction is required for the maintenance of mitochondrial redox homeostasis. Component of the mitochondrial core iron-sulfur cluster (ISC) complex composed of NFS1, LYRM4, NDUFAB1, ISCU, FXN, and FDX2; this complex is a heterohexamer containing two copies of each monomer. Component of the cyteine desulfurase complex composed of NFS1, LYRM4 and NDUFAB1; this complex contributes to the stability and cysteine desulfurase activity of NFS1. In terms of processing, phosphopantetheinylation at Ser-112 is essential for interactions with LYR motif-containing proteins.

It is found in the mitochondrion. Its function is as follows. Carrier of the growing fatty acid chain in fatty acid biosynthesis. Accessory and non-catalytic subunit of the mitochondrial membrane respiratory chain NADH dehydrogenase (Complex I), which functions in the transfer of electrons from NADH to the respiratory chain. Accessory protein, of the core iron-sulfur cluster (ISC) assembly complex, that regulates, in association with LYRM4, the stability and the cysteine desulfurase activity of NFS1 and participates in the [2Fe-2S] clusters assembly on the scaffolding protein ISCU. The core iron-sulfur cluster (ISC) assembly complex is involved in the de novo synthesis of a [2Fe-2S] cluster, the first step of the mitochondrial iron-sulfur protein biogenesis. This process is initiated by the cysteine desulfurase complex (NFS1:LYRM4:NDUFAB1) that produces persulfide which is delivered on the scaffold protein ISCU in a FXN-dependent manner. Then this complex is stabilized by FDX2 which provides reducing equivalents to accomplish the [2Fe-2S] cluster assembly. Finally, the [2Fe-2S] cluster is transferred from ISCU to chaperone proteins, including HSCB, HSPA9 and GLRX5. This chain is Acyl carrier protein, mitochondrial, found in Gorilla gorilla gorilla (Western lowland gorilla).